A 591-amino-acid polypeptide reads, in one-letter code: Aspartate--tRNA(Asp/Asn) ligase (591 aa).

Glutamate 174 lines the L-aspartate pocket. The interval 198–201 is aspartate; sequence QLFK. Arginine 220 is an L-aspartate binding site. ATP is bound by residues 220-222 and glutamine 229; that span reads RDE. Histidine 450 contacts L-aspartate. ATP is bound at residue glutamate 483. Residue arginine 490 coordinates L-aspartate. 535–538 serves as a coordination point for ATP; the sequence is GLDR.

This sequence belongs to the class-II aminoacyl-tRNA synthetase family. Type 1 subfamily. As to quaternary structure, homodimer.

The protein resides in the cytoplasm. The catalysed reaction is tRNA(Asx) + L-aspartate + ATP = L-aspartyl-tRNA(Asx) + AMP + diphosphate. Aspartyl-tRNA synthetase with relaxed tRNA specificity since it is able to aspartylate not only its cognate tRNA(Asp) but also tRNA(Asn). Reaction proceeds in two steps: L-aspartate is first activated by ATP to form Asp-AMP and then transferred to the acceptor end of tRNA(Asp/Asn). This chain is Aspartate--tRNA(Asp/Asn) ligase, found in Azotobacter vinelandii (strain DJ / ATCC BAA-1303).